Reading from the N-terminus, the 417-residue chain is Glutamyl-tRNA reductase (417 aa).

Residues 49–52, S109, 114–116, and Q120 each bind substrate; these read TCNR and ESQ. Residue C50 is the Nucleophile of the active site. NADP(+) is bound at residue 189-194; it reads GLGEIG.

This sequence belongs to the glutamyl-tRNA reductase family. As to quaternary structure, homodimer.

It catalyses the reaction (S)-4-amino-5-oxopentanoate + tRNA(Glu) + NADP(+) = L-glutamyl-tRNA(Glu) + NADPH + H(+). It functions in the pathway porphyrin-containing compound metabolism; protoporphyrin-IX biosynthesis; 5-aminolevulinate from L-glutamyl-tRNA(Glu): step 1/2. Functionally, catalyzes the NADPH-dependent reduction of glutamyl-tRNA(Glu) to glutamate 1-semialdehyde (GSA). This Streptococcus sanguinis (strain SK36) protein is Glutamyl-tRNA reductase.